The chain runs to 413 residues: Serine/threonine transporter SstT (413 aa).

Transmembrane regions (helical) follow at residues 22 to 42 (GLLL…VLGF), 61 to 81 (AVAP…KQLG), 89 to 109 (IVVL…LFSF), 148 to 168 (ALFN…GIAL), 189 to 209 (IVHF…AETL), 224 to 244 (LVVL…ILVF), 305 to 325 (MAGA…TLGI), 337 to 357 (VVAS…LLLI), and 363 to 383 (LFGI…VIGV).

This sequence belongs to the dicarboxylate/amino acid:cation symporter (DAACS) (TC 2.A.23) family.

It localises to the cell inner membrane. It carries out the reaction L-serine(in) + Na(+)(in) = L-serine(out) + Na(+)(out). The catalysed reaction is L-threonine(in) + Na(+)(in) = L-threonine(out) + Na(+)(out). Involved in the import of serine and threonine into the cell, with the concomitant import of sodium (symport system). This is Serine/threonine transporter SstT from Histophilus somni (strain 129Pt) (Haemophilus somnus).